Here is a 342-residue protein sequence, read N- to C-terminus: Ribosomal RNA small subunit methyltransferase C (342 aa).

This sequence belongs to the methyltransferase superfamily. RsmC family. Monomer.

It localises to the cytoplasm. The enzyme catalyses guanosine(1207) in 16S rRNA + S-adenosyl-L-methionine = N(2)-methylguanosine(1207) in 16S rRNA + S-adenosyl-L-homocysteine + H(+). In terms of biological role, specifically methylates the guanine in position 1207 of 16S rRNA in the 30S particle. In Salmonella heidelberg (strain SL476), this protein is Ribosomal RNA small subunit methyltransferase C.